We begin with the raw amino-acid sequence, 114 residues long: Small ribosomal subunit protein uS17 (114 aa).

It belongs to the universal ribosomal protein uS17 family. As to quaternary structure, part of the 30S ribosomal subunit.

In terms of biological role, one of the primary rRNA binding proteins, it binds specifically to the 5'-end of 16S ribosomal RNA. The chain is Small ribosomal subunit protein uS17 from Saccharolobus solfataricus (strain ATCC 35092 / DSM 1617 / JCM 11322 / P2) (Sulfolobus solfataricus).